We begin with the raw amino-acid sequence, 185 residues long: Ribosome-recycling factor (185 aa).

It belongs to the RRF family.

It is found in the cytoplasm. In terms of biological role, responsible for the release of ribosomes from messenger RNA at the termination of protein biosynthesis. May increase the efficiency of translation by recycling ribosomes from one round of translation to another. This Pseudomonas entomophila (strain L48) protein is Ribosome-recycling factor.